The sequence spans 271 residues: Phospholipid scramblase family member 5 (271 aa).

Over residues Met-1–Arg-10 the composition is skewed to polar residues. The disordered stretch occupies residues Met-1–Pro-33. Positions Met-1–Pro-45 are proline-rich domain (PRD).

The protein belongs to the phospholipid scramblase family.

The protein is Phospholipid scramblase family member 5 (PLSCR5) of Homo sapiens (Human).